The primary structure comprises 52 residues: UPF0057 membrane protein YqaE (52 aa).

Transmembrane regions (helical) follow at residues 1–21 (MGFWRIVITIILPPLGVLLGK) and 23–43 (FGWAFIINILLTLLGYIPGLI).

The protein belongs to the UPF0057 (PMP3) family.

It localises to the cell membrane. The polypeptide is UPF0057 membrane protein YqaE (yqaE) (Escherichia coli O157:H7).